Consider the following 80-residue polypeptide: Cell division activator CedA (80 aa).

The protein belongs to the CedA family.

Functionally, activates the cell division inhibited by chromosomal DNA over-replication. The sequence is that of Cell division activator CedA from Escherichia coli O1:K1 / APEC.